The sequence spans 635 residues: Threonine--tRNA ligase (635 aa).

The TGS domain occupies 1–61 (MIKITLKDGS…ENDCTLNLLT (61 aa)). The segment at 242–532 (DHRKLGRELD…LTEHYAGAFP (291 aa)) is catalytic. The Zn(2+) site is built by Cys-333, His-384, and His-509.

Belongs to the class-II aminoacyl-tRNA synthetase family. Homodimer. The cofactor is Zn(2+).

The protein localises to the cytoplasm. It catalyses the reaction tRNA(Thr) + L-threonine + ATP = L-threonyl-tRNA(Thr) + AMP + diphosphate + H(+). Functionally, catalyzes the attachment of threonine to tRNA(Thr) in a two-step reaction: L-threonine is first activated by ATP to form Thr-AMP and then transferred to the acceptor end of tRNA(Thr). Also edits incorrectly charged L-seryl-tRNA(Thr). This is Threonine--tRNA ligase from Acetivibrio thermocellus (strain ATCC 27405 / DSM 1237 / JCM 9322 / NBRC 103400 / NCIMB 10682 / NRRL B-4536 / VPI 7372) (Clostridium thermocellum).